Here is a 369-residue protein sequence, read N- to C-terminus: Protein FAM187B (369 aa).

An N-terminal signal peptide occupies residues 1–17 (MPPMLWLLLHFAAPALG). Residues 18-335 (FYFSISCPSG…RADSVLKGLK (318 aa)) lie on the Extracellular side of the membrane. Residues N45, N68, and N130 are each glycosylated (N-linked (GlcNAc...) asparagine). Residues 336–356 (LVLLVVTVLALLGALLKCIHP) form a helical membrane-spanning segment. Residues 357–369 (SPGRRSTQVLVVK) lie on the Cytoplasmic side of the membrane.

This sequence belongs to the FAM187 family.

The protein resides in the membrane. The sequence is that of Protein FAM187B (FAM187B) from Homo sapiens (Human).